Here is an 825-residue protein sequence, read N- to C-terminus: MKFIKRLLVFSLICIILGVTTIFGFYFYVKSDLPDVATLRDVQLQTPMQVFSQDGKLIAQFGEKRRIPLKLEEMPKELIEAVIATEDSRYYEHYGFDPIGITRAAFAVLASGSASQGASTITQQLARNFFLSNEKKVMRKVKEIFIAIHIEQLLSKQEILELYLNKIYLGYRSYGVGAAAQAYFGKEVKDLTLGEIALIAGLPKAPSTMNPIYSVERATNRRNVVLQRMLDEKYITKAEYDAARAEPVLPKYHGAEIELNAPYVAEIARAWMVERYGEEAAYTSGMNVYTTVDSKLQRAANQAAINNLLAYDERHGYRGAEKELWQVNQPAWSSTQLSEYLSNEPTYGDMFPAAVLSVEEKSAQVWVKSYGVQTIAWEDMNWARRFINDDRQGPLPKSANEFLAAGQQIWVRPRTQDGAITAWKLTQVPNANTAFVAMNPENGAVTALVGGFNFVHNKFNRATQSVRQVGSSIKPFIYSAALNKGLTLATLINDAPINQWDESQGTAWRPKNSPPTYTGPTRLRIGLAQSKNVMAVRVLREVGLDETREYLTRFGFKLDQLPRSETIALGAGSLTPVQMAQGFSVFANNGYFVEPFYISRVENPFGNIEFSAEPKVVCHRECSSELDEFAEQDAASPYAPKVISEQNAFLTREMLYSNIWGGGEWSSDTGWNGTGWRAQALKRRDIGGKTGTTNDSKDAWYNGYAPGIVGVAWVGFDDHSRNLGKTAPNRNIEDDVSGAESGGKTALPAWVEFMSLALQDVPVQQKAVPNNIARVRIDRDTGLLTNKLDSSSMFEYFEAGTEPTEYVSEHVNESIYSTSSGEELF.

The Cytoplasmic portion of the chain corresponds to 1-6 (MKFIKR). The chain crosses the membrane as a helical; Signal-anchor for type II membrane protein span at residues 7–27 (LLVFSLICIILGVTTIFGFYF). At 28–825 (YVKSDLPDVA…YSTSSGEELF (798 aa)) the chain is on the periplasmic side. The tract at residues 48 to 216 (MQVFSQDGKL…STMNPIYSVE (169 aa)) is transglycosylase. Glu-86 (proton donor; for transglycosylase activity) is an active-site residue. The interval 413–752 (PRTQDGAITA…GKTALPAWVE (340 aa)) is transpeptidase. Ser-471 (acyl-ester intermediate; for transpeptidase activity) is an active-site residue.

It in the N-terminal section; belongs to the glycosyltransferase 51 family. This sequence in the C-terminal section; belongs to the transpeptidase family.

The protein resides in the cell inner membrane. The enzyme catalyses [GlcNAc-(1-&gt;4)-Mur2Ac(oyl-L-Ala-gamma-D-Glu-L-Lys-D-Ala-D-Ala)](n)-di-trans,octa-cis-undecaprenyl diphosphate + beta-D-GlcNAc-(1-&gt;4)-Mur2Ac(oyl-L-Ala-gamma-D-Glu-L-Lys-D-Ala-D-Ala)-di-trans,octa-cis-undecaprenyl diphosphate = [GlcNAc-(1-&gt;4)-Mur2Ac(oyl-L-Ala-gamma-D-Glu-L-Lys-D-Ala-D-Ala)](n+1)-di-trans,octa-cis-undecaprenyl diphosphate + di-trans,octa-cis-undecaprenyl diphosphate + H(+). It catalyses the reaction Preferential cleavage: (Ac)2-L-Lys-D-Ala-|-D-Ala. Also transpeptidation of peptidyl-alanyl moieties that are N-acyl substituents of D-alanine.. The protein operates within cell wall biogenesis; peptidoglycan biosynthesis. In terms of biological role, cell wall formation. Synthesis of cross-linked peptidoglycan from the lipid intermediates. The enzyme has a penicillin-insensitive transglycosylase N-terminal domain (formation of linear glycan strands) and a penicillin-sensitive transpeptidase C-terminal domain (cross-linking of the peptide subunits). In Vibrio cholerae serotype O1 (strain ATCC 39315 / El Tor Inaba N16961), this protein is Penicillin-binding protein 1A (mrcA).